The sequence spans 493 residues: MLPYMDQVLRAFYQSTHWSTQNSYEDITATSRTLLDFRIPSAIHLQISNKSTPNTFNSLDFSTRSRINGSLSYLYSDAQQLEKFMRNSTDIPLQDATETYRQLQPNLNFSVSSANTLSSDNTTVDNDKKLLHDSKFVKKSLYYGRMYYPSSDLEAMIIKRLSPQTQFMLKGVSSFKESLNVLTCYFQRDSHRNLQEWIFSTSDLLCGYRVLHNFLTTPSKFNTSLYNNSSLSLGAEFWLGLVSLSPGCSTTLRYYTHSTNTGRPLTLTLSWNPLFGHISSTYSAKTGTNSTFCAKYDFNLYSIESNLSFGCEFWQKKHHLLETNKNNNDKLEPISDELVDINPNSRATKLLHENVPDLNSAVNDIPSTLDIPVHKQKLLNDLTYAFSSSLRKIDEERSTIEKFDNKINSSIFTSVWKLSTSLRDKTLKLLWEGKWRGFLISAGTELVFTRGFQESLSDDEKNDNAISISATDTENGNIPVFPAKFGIQFQYST.

It belongs to the MDM10 family. Component of the ER-mitochondria encounter structure (ERMES) or MDM complex, composed of MMM1, MDM10, MDM12 and MDM34. Associates with the mitochondrial outer membrane sorting assembly machinery SAM(core) complex, which consists of SAM35, SAM37 and SAM50, to form a SAM(holo) complex.

The protein localises to the mitochondrion outer membrane. In terms of biological role, component of the ERMES/MDM complex, which serves as a molecular tether to connect the endoplasmic reticulum and mitochondria. Components of this complex are involved in the control of mitochondrial shape and protein biogenesis and may function in phospholipid exchange. MDM10 is involved in the late assembly steps of the general translocase of the mitochondrial outer membrane (TOM complex). Functions in the TOM40-specific route of the assembly of outer membrane beta-barrel proteins, including the association of TOM40 with the receptor TOM22 and small TOM proteins. Can associate with the SAM(core) complex as well as the MDM12-MMM1 complex, both involved in late steps of the major beta-barrel assembly pathway, that is responsible for biogenesis of all outer membrane beta-barrel proteins. May act as a switch that shuttles between both complexes and channels precursor proteins into the TOM40-specific pathway. Plays a role in mitochondrial morphology and in the inheritance of mitochondria. This Saccharomyces cerevisiae (strain ATCC 204508 / S288c) (Baker's yeast) protein is Mitochondrial distribution and morphology protein 10.